The following is a 194-amino-acid chain: ATP-dependent Clp protease proteolytic subunit (194 aa).

Ser-98 serves as the catalytic Nucleophile. The active site involves His-123.

It belongs to the peptidase S14 family. As to quaternary structure, fourteen ClpP subunits assemble into 2 heptameric rings which stack back to back to give a disk-like structure with a central cavity, resembling the structure of eukaryotic proteasomes.

Its subcellular location is the cytoplasm. It carries out the reaction Hydrolysis of proteins to small peptides in the presence of ATP and magnesium. alpha-casein is the usual test substrate. In the absence of ATP, only oligopeptides shorter than five residues are hydrolyzed (such as succinyl-Leu-Tyr-|-NHMec, and Leu-Tyr-Leu-|-Tyr-Trp, in which cleavage of the -Tyr-|-Leu- and -Tyr-|-Trp bonds also occurs).. Functionally, cleaves peptides in various proteins in a process that requires ATP hydrolysis. Has a chymotrypsin-like activity. Plays a major role in the degradation of misfolded proteins. The sequence is that of ATP-dependent Clp protease proteolytic subunit from Clostridium botulinum (strain Loch Maree / Type A3).